A 138-amino-acid polypeptide reads, in one-letter code: Large ribosomal subunit protein uL16 (138 aa).

The segment covering 1 to 19 (MLIPKRVKYRRQHRPHRSG) has biased composition (basic residues). The interval 1–24 (MLIPKRVKYRRQHRPHRSGVSKGG) is disordered.

The protein belongs to the universal ribosomal protein uL16 family. As to quaternary structure, part of the 50S ribosomal subunit.

Its function is as follows. Binds 23S rRNA and is also seen to make contacts with the A and possibly P site tRNAs. The protein is Large ribosomal subunit protein uL16 of Corynebacterium diphtheriae (strain ATCC 700971 / NCTC 13129 / Biotype gravis).